Here is a 1004-residue protein sequence, read N- to C-terminus: Ovochymase-2 (1004 aa).

Residues 1–19 (MPTRNLLLGSILLSLAVKG) form the signal peptide. Positions 20-45 (DPGPHRGARCGVSPLGSATELNYLSR) are cleaved as a propeptide — activation peptide. Positions 46–295 (IVGGRESKKG…LLGWVSSQLN (250 aa)) constitute a Peptidase S1 1 domain. The cysteines at positions 71 and 87 are disulfide-linked. The active-site Charge relay system is His86. Position 113 (Glu113) interacts with Ca(2+). A glycan (N-linked (GlcNAc...) asparagine) is linked at Asn128. The Charge relay system role is filled by Asp136. Intrachain disulfides connect Cys170-Cys240, Cys201-Cys219, and Cys230-Cys259. Ser234 acts as the Charge relay system in catalysis. CUB domains are found at residues 309-419 (QDGV…YSAV) and 429-541 (CGSF…FTFV). Asn351 is a glycosylation site (N-linked (GlcNAc...) asparagine). Residues Cys363 and Cys382 are joined by a disulfide bond. N-linked (GlcNAc...) asparagine glycosylation occurs at Asn408. Cystine bridges form between Cys429–Cys456 and Cys483–Cys504. Residues 547 to 558 (VEDSRQGNMPST) are compositionally biased toward polar residues. Positions 547-566 (VEDSRQGNMPSTNKKETTAQ) are disordered. A Peptidase S1 2 domain is found at 580–820 (IYNSIAKVEE…FIDWIRQIMS (241 aa)). Residues 584 to 1004 (IAKVEEAVPH…VVPDSDSSEP (421 aa)) constitute a propeptide, activation peptide. 4 disulfide bridges follow: Cys609–Cys625, Cys706–Cys776, Cys737–Cys754, and Cys766–Cys796. Residue Asn763 is glycosylated (N-linked (GlcNAc...) asparagine). N-linked (GlcNAc...) asparagine glycosylation occurs at Asn940.

It belongs to the peptidase S1 family. The catalytically inactive 110 kDa form is processed both N- and C-terminally to give rise to the 66 kDa catalytically active form. As to expression, specifically expressed in the pars recta oviduct.

Its subcellular location is the secreted. The catalysed reaction is Preferential cleavage at 371-Gly-Ser-Arg-|-Trp-374 of glycoprotein gp43 in Xenopus laevis coelemic egg envelope to yield gp41.. In terms of biological role, converts the glycoprotein envelope surrounding the egg from an unfertilizable to a fertilizable form during its transit through the pars recta portion of the oviduct by selectively hydrolyzing the envelope glycoprotein gp43. The egg envelope is converted to a sperm-penetrable form, via an increase in sperm binding. The protein is Ovochymase-2 (ovch2) of Xenopus laevis (African clawed frog).